Consider the following 550-residue polypeptide: Methyl-accepting chemotaxis protein PcaY (550 aa).

Residues 1–19 (MVPTRSTARMLANLKIRTG) are Cytoplasmic-facing. Residues 20–40 (MFWVLSLFSLTLLFSTASAWW) form a helical membrane-spanning segment. At 41 to 198 (AALGSDQQIT…ESDRRLARAQ (158 aa)) the chain is on the periplasmic side. A ligand-binding domain region spans residues 44–196 (GSDQQITELD…MLESDRRLAR (153 aa)). The benzoate site is built by R71 and N75. R71, N75, and Y135 together coordinate salicylate. A 3,4-dihydroxybenzoate-binding site is contributed by 71–78 (RSSANVSS). L-quinate contacts are provided by residues 71-78 (RSSANVSS), Y135, Q142, and N158. Q169 is a 3,4-dihydroxybenzoate binding site. The chain crosses the membrane as a helical span at residues 199 to 219 (LLSLCLLGVTVVLAVLCWAFI). Over 220–550 (AQRVLHPLRE…MTALVGRFKV (331 aa)) the chain is Cytoplasmic. The HAMP domain occupies 221 to 273 (QRVLHPLREAGGHFRRIASGDLSVPVQGQGNNEIGQLFHELQRMQQSQRDTLG). In terms of domain architecture, Methyl-accepting transducer spans 278–514 (CARQLDAAAT…EVDRNLLNIR (237 aa)).

Belongs to the methyl-accepting chemotaxis (MCP) protein family. As to quaternary structure, ligand free PcaY_PP-ligand-binding domain (LBD) is present in a monomer-dimer equilibrium. Only the dimeric LBD is able to bind ligands which in turn causes dimer stabilization.

It is found in the cell inner membrane. Functionally, chemotactic-signal transducers respond to changes in the concentration of attractants and repellents in the environment, transduce a signal from the outside to the inside of the cell, and facilitate sensory adaptation through the variation of the level of methylation. PcaY recognizes a wide range of compounds containing a C6-membered ring with a carboxylate group. Binds preferentially compounds that serve as carbon sources and among them those that rapidly promote growth. Tightest binding compounds are quinate, shikimate, 3-dehydroshikimate and protocatechuate, which are at the interception of the biosynthetic shikimate and catabolic quinate pathways. The chain is Methyl-accepting chemotaxis protein PcaY from Pseudomonas putida (strain ATCC 47054 / DSM 6125 / CFBP 8728 / NCIMB 11950 / KT2440).